A 199-amino-acid polypeptide reads, in one-letter code: RNA-free ribonuclease P (199 aa).

This sequence belongs to the HARP family.

The catalysed reaction is Endonucleolytic cleavage of RNA, removing 5'-extranucleotides from tRNA precursor.. RNA-free RNase P that catalyzes the removal of the 5'-leader sequence from pre-tRNA to produce the mature 5'-terminus. In Thermococcus onnurineus (strain NA1), this protein is RNA-free ribonuclease P.